The chain runs to 277 residues: Large ribosomal subunit protein uL2 (277 aa).

Residues 219–277 (TVRGSVMNPNDHPHGGGEGKAPVGRKAPSTPWGKPALGLKTRNKKAKSDKLIVRRRNEK) form a disordered region. The segment covering 264 to 277 (AKSDKLIVRRRNEK) has biased composition (basic and acidic residues).

This sequence belongs to the universal ribosomal protein uL2 family. In terms of assembly, part of the 50S ribosomal subunit. Forms a bridge to the 30S subunit in the 70S ribosome.

In terms of biological role, one of the primary rRNA binding proteins. Required for association of the 30S and 50S subunits to form the 70S ribosome, for tRNA binding and peptide bond formation. It has been suggested to have peptidyltransferase activity; this is somewhat controversial. Makes several contacts with the 16S rRNA in the 70S ribosome. The protein is Large ribosomal subunit protein uL2 of Streptococcus pyogenes serotype M1.